Consider the following 647-residue polypeptide: Methyl-accepting chemotaxis protein McpK (647 aa).

Over 1–16 (MYDWWVLQLAKLSVSR) the chain is Cytoplasmic. A helical membrane pass occupies residues 17–37 (KLMVGFGVLLALLLLVVISSN). Residues 38 to 291 (RTLTHQTALS…LRESTASRDR (254 aa)) lie on the Periplasmic side of the membrane. One can recognise an HBM domain in the interval 45-287 (ALSEQLAEVA…AGRQLRESTA (243 aa)). A helical membrane pass occupies residues 292 to 312 (ASLWLIAALALAFGCVAGWAI). The Cytoplasmic portion of the chain corresponds to 313–647 (NRQIVRPLDE…LQAQVGRFRL (335 aa)). In terms of domain architecture, HAMP spans 314 to 370 (RQIVRPLDEALAQAEAIAAGDLGKRPQNPLTLQRRDELGQLQRVMQRMGDSLRELVG). The Methyl-accepting transducer domain occupies 375-611 (GVSQLASSAE…EINRSVLSVR (237 aa)).

Belongs to the methyl-accepting chemotaxis (MCP) protein family. Ligand free ligand-binding domain (LBD) is present in a monomer-dimer equilibrium. AlphaKG binding stabilizes the homodimer.

It localises to the cell inner membrane. Functionally, chemotactic-signal transducers respond to changes in the concentration of attractants and repellents in the environment, transduce a signal from the outside to the inside of the cell, and facilitate sensory adaptation through the variation of the level of methylation. McpK is a chemoreceptor that specifically binds and mediates chemotaxis to alpha-ketoglutarate (alphaKG). This is Methyl-accepting chemotaxis protein McpK from Pseudomonas aeruginosa (strain ATCC 15692 / DSM 22644 / CIP 104116 / JCM 14847 / LMG 12228 / 1C / PRS 101 / PAO1).